Consider the following 111-residue polypeptide: Cystatin (111 aa).

Positions G3–W103 constitute a Cystatin domain. Positions Q47 to G51 match the Secondary area of contact motif. C65 and C81 form a disulfide bridge.

The protein belongs to the cystatin family. Expressed by the venom gland.

It is found in the secreted. In terms of biological role, inhibits various C1 cysteine proteases including cathepsin L, papain and cathepsin B. This protein has no toxic activity and its function in the venom is unknown. It may play a role as housekeeping or regulatory protein. The sequence is that of Cystatin from Bitis arietans (African puff adder).